Reading from the N-terminus, the 237-residue chain is Tyrosine-protein kinase YwqD (237 aa).

The residue at position 228 (Tyr228) is a Phosphotyrosine; by autocatalysis.

It belongs to the CpsD/CapB family. Post-translationally, autophosphorylated in vitro, which inhibits ATPase activity. Dephosphorylated by YwqE in vitro.

The enzyme catalyses L-tyrosyl-[protein] + ATP = O-phospho-L-tyrosyl-[protein] + ADP + H(+). Functionally, may be involved in the regulation of capsular polysaccharide biosynthesis. Autophosphorylates in vitro. Phosphorylates and activates in vitro two UDP-glucose dehydrogenases, YwqF and TuaD, as well as the DNA-binding proteins Ssb and SsbB. This chain is Tyrosine-protein kinase YwqD (ywqD), found in Bacillus subtilis (strain 168).